We begin with the raw amino-acid sequence, 276 residues long: Ribosomal RNA small subunit methyltransferase A (276 aa).

S-adenosyl-L-methionine contacts are provided by asparagine 15, leucine 17, glycine 42, glutamate 63, aspartate 88, and asparagine 111.

It belongs to the class I-like SAM-binding methyltransferase superfamily. rRNA adenine N(6)-methyltransferase family. RsmA subfamily.

Its subcellular location is the cytoplasm. The catalysed reaction is adenosine(1518)/adenosine(1519) in 16S rRNA + 4 S-adenosyl-L-methionine = N(6)-dimethyladenosine(1518)/N(6)-dimethyladenosine(1519) in 16S rRNA + 4 S-adenosyl-L-homocysteine + 4 H(+). In terms of biological role, specifically dimethylates two adjacent adenosines (A1518 and A1519) in the loop of a conserved hairpin near the 3'-end of 16S rRNA in the 30S particle. May play a critical role in biogenesis of 30S subunits. This chain is Ribosomal RNA small subunit methyltransferase A, found in Geobacter sulfurreducens (strain ATCC 51573 / DSM 12127 / PCA).